Reading from the N-terminus, the 127-residue chain is Small ribosomal subunit protein uS11 (127 aa).

The protein belongs to the universal ribosomal protein uS11 family. In terms of assembly, part of the 30S ribosomal subunit. Interacts with proteins S7 and S18. Binds to IF-3.

In terms of biological role, located on the platform of the 30S subunit, it bridges several disparate RNA helices of the 16S rRNA. Forms part of the Shine-Dalgarno cleft in the 70S ribosome. This chain is Small ribosomal subunit protein uS11, found in Ehrlichia ruminantium (strain Gardel).